A 139-amino-acid polypeptide reads, in one-letter code: D-ribose pyranase (139 aa).

Residue His-20 is the Proton donor of the active site. Substrate is bound by residues Asp-28, His-106, and 128-130; that span reads YAN.

This sequence belongs to the RbsD / FucU family. RbsD subfamily. In terms of assembly, homodecamer.

It localises to the cytoplasm. It catalyses the reaction beta-D-ribopyranose = beta-D-ribofuranose. The protein operates within carbohydrate metabolism; D-ribose degradation; D-ribose 5-phosphate from beta-D-ribopyranose: step 1/2. Catalyzes the interconversion of beta-pyran and beta-furan forms of D-ribose. The protein is D-ribose pyranase of Histophilus somni (strain 129Pt) (Haemophilus somnus).